The primary structure comprises 20 residues: Short cationic peptide-3a (20 aa).

Glu-20 is modified (glutamic acid 1-amide).

As to expression, expressed by the venom gland.

It localises to the secreted. The polypeptide is Short cationic peptide-3a (Cupiennius salei (American wandering spider)).